We begin with the raw amino-acid sequence, 254 residues long: Triosephosphate isomerase, cytosolic (254 aa).

Substrate-binding residues include Asn-10 and Lys-12. Catalysis depends on His-96, which acts as the Electrophile. Glu-166 functions as the Proton acceptor in the catalytic mechanism.

This sequence belongs to the triosephosphate isomerase family. In terms of assembly, homodimer.

Its subcellular location is the cytoplasm. It catalyses the reaction D-glyceraldehyde 3-phosphate = dihydroxyacetone phosphate. It participates in carbohydrate biosynthesis; gluconeogenesis. Its pathway is carbohydrate degradation; glycolysis; D-glyceraldehyde 3-phosphate from glycerone phosphate: step 1/1. The polypeptide is Triosephosphate isomerase, cytosolic (TPIP1) (Petunia hybrida (Petunia)).